The chain runs to 255 residues: Thiazole synthase (255 aa).

The active-site Schiff-base intermediate with DXP is the Lys96. Residues Gly157, 183–184 (AG), and 205–206 (NT) contribute to the 1-deoxy-D-xylulose 5-phosphate site.

This sequence belongs to the ThiG family. Homotetramer. Forms heterodimers with either ThiH or ThiS.

It localises to the cytoplasm. It carries out the reaction [ThiS sulfur-carrier protein]-C-terminal-Gly-aminoethanethioate + 2-iminoacetate + 1-deoxy-D-xylulose 5-phosphate = [ThiS sulfur-carrier protein]-C-terminal Gly-Gly + 2-[(2R,5Z)-2-carboxy-4-methylthiazol-5(2H)-ylidene]ethyl phosphate + 2 H2O + H(+). Its pathway is cofactor biosynthesis; thiamine diphosphate biosynthesis. Functionally, catalyzes the rearrangement of 1-deoxy-D-xylulose 5-phosphate (DXP) to produce the thiazole phosphate moiety of thiamine. Sulfur is provided by the thiocarboxylate moiety of the carrier protein ThiS. In vitro, sulfur can be provided by H(2)S. In Staphylococcus epidermidis (strain ATCC 12228 / FDA PCI 1200), this protein is Thiazole synthase.